The sequence spans 634 residues: tRNA uridine 5-carboxymethylaminomethyl modification enzyme MnmG (634 aa).

Position 14 to 19 (14 to 19) interacts with FAD; the sequence is GGGHAG. 279–293 serves as a coordination point for NAD(+); sequence GPRYCPSIEDKVVRF.

Belongs to the MnmG family. As to quaternary structure, homodimer. Heterotetramer of two MnmE and two MnmG subunits. FAD is required as a cofactor.

It is found in the cytoplasm. Its function is as follows. NAD-binding protein involved in the addition of a carboxymethylaminomethyl (cmnm) group at the wobble position (U34) of certain tRNAs, forming tRNA-cmnm(5)s(2)U34. The protein is tRNA uridine 5-carboxymethylaminomethyl modification enzyme MnmG of Xanthomonas campestris pv. campestris (strain B100).